The sequence spans 415 residues: Gamma-glutamyl phosphate reductase (415 aa).

This sequence belongs to the gamma-glutamyl phosphate reductase family.

It localises to the cytoplasm. It catalyses the reaction L-glutamate 5-semialdehyde + phosphate + NADP(+) = L-glutamyl 5-phosphate + NADPH + H(+). The protein operates within amino-acid biosynthesis; L-proline biosynthesis; L-glutamate 5-semialdehyde from L-glutamate: step 2/2. Catalyzes the NADPH-dependent reduction of L-glutamate 5-phosphate into L-glutamate 5-semialdehyde and phosphate. The product spontaneously undergoes cyclization to form 1-pyrroline-5-carboxylate. This Bacillus cereus (strain 03BB102) protein is Gamma-glutamyl phosphate reductase.